Here is a 153-residue protein sequence, read N- to C-terminus: MLRITYKLPIALRQQAFVARKLVPTIKANYSTNSDDDVVSRIKVHPIKRINESIDKKRARLIYQSRKRGILETDLLLSGFAAKHLRSMTNEELDEYDALLNELDWDIYYWVTKNYKTSPVPERWKNSEILKKLQDFSENKEKKILRMPDLENY.

This sequence belongs to the SDHAF2 family. In terms of assembly, interacts with the flavoprotein subunit within the SDH catalytic dimer.

It is found in the mitochondrion matrix. Functionally, plays an essential role in the assembly of succinate dehydrogenase (SDH), an enzyme complex (also referred to as respiratory complex II) that is a component of both the tricarboxylic acid (TCA) cycle and the mitochondrial electron transport chain, and which couples the oxidation of succinate to fumarate with the reduction of ubiquinone (coenzyme Q) to ubiquinol. Required for flavinylation (covalent attachment of FAD) of the flavoprotein subunit of the SDH catalytic dimer. The sequence is that of Succinate dehydrogenase assembly factor 2, mitochondrial from Candida glabrata (strain ATCC 2001 / BCRC 20586 / JCM 3761 / NBRC 0622 / NRRL Y-65 / CBS 138) (Yeast).